We begin with the raw amino-acid sequence, 263 residues long: 4-hydroxy-tetrahydrodipicolinate reductase (263 aa).

An NAD(+)-binding site is contributed by 10 to 15 (GASGKM). Arginine 38 provides a ligand contact to NADP(+). NAD(+) is bound by residues 97–99 (GTT) and 123–126 (APNF). Histidine 153 acts as the Proton donor/acceptor in catalysis. Histidine 154 serves as a coordination point for (S)-2,3,4,5-tetrahydrodipicolinate. Lysine 157 (proton donor) is an active-site residue. 163–164 (GT) contacts (S)-2,3,4,5-tetrahydrodipicolinate.

It belongs to the DapB family.

The protein resides in the cytoplasm. The enzyme catalyses (S)-2,3,4,5-tetrahydrodipicolinate + NAD(+) + H2O = (2S,4S)-4-hydroxy-2,3,4,5-tetrahydrodipicolinate + NADH + H(+). It carries out the reaction (S)-2,3,4,5-tetrahydrodipicolinate + NADP(+) + H2O = (2S,4S)-4-hydroxy-2,3,4,5-tetrahydrodipicolinate + NADPH + H(+). The protein operates within amino-acid biosynthesis; L-lysine biosynthesis via DAP pathway; (S)-tetrahydrodipicolinate from L-aspartate: step 4/4. Catalyzes the conversion of 4-hydroxy-tetrahydrodipicolinate (HTPA) to tetrahydrodipicolinate. This chain is 4-hydroxy-tetrahydrodipicolinate reductase, found in Dehalococcoides mccartyi (strain ATCC BAA-2100 / JCM 16839 / KCTC 5957 / BAV1).